The primary structure comprises 492 residues: Peptidyl-prolyl cis-trans isomerase-like 4 (492 aa).

The PPIase cyclophilin-type domain occupies 1–161; that stretch reads MAVLLETTLG…QDIRINHTVI (161 aa). The disordered stretch occupies residues 167–188; that stretch reads DDPPDLLIPDRSPEPTREQLDS. Residues 177–187 show a composition bias toward basic and acidic residues; it reads RSPEPTREQLD. A Phosphoserine modification is found at Ser178. Thr182 is modified (phosphothreonine). Glycyl lysine isopeptide (Lys-Gly) (interchain with G-Cter in SUMO2) cross-links involve residues Lys201, Lys212, and Lys218. Positions 240 to 318 constitute an RRM domain; sequence NVLFVCKLNP…RRIHVDFSQS (79 aa). Residues Lys321 and Lys362 each participate in a glycyl lysine isopeptide (Lys-Gly) (interchain with G-Cter in SUMO2) cross-link. Disordered regions lie at residues 368–406 and 423–492; these read DEQAEDSKSSHSHTSKKHKKKTHHCSEEKEDEDYMPIKN and EESC…SKYR. Basic residues predominate over residues 377-390; it reads SHSHTSKKHKKKTH. At Ser393 the chain carries Phosphoserine. Lys405 participates in a covalent cross-link: Glycyl lysine isopeptide (Lys-Gly) (interchain with G-Cter in SUMO2). Positions 426-452 are enriched in basic and acidic residues; the sequence is CWEKQKSEKRDRTQNRSRSRSRERDGH. Lys460 participates in a covalent cross-link: Glycyl lysine isopeptide (Lys-Gly) (interchain with G-Cter in SUMO2). Phosphoserine is present on Ser471. Residues 482–492 show a composition bias toward basic and acidic residues; that stretch reads KSKDKEKSKYR.

This sequence belongs to the cyclophilin-type PPIase family. PPIL4 subfamily. In terms of tissue distribution, abundantly expressed in kidney but has a ubiquitously low expression pattern in other adult tissues.

It localises to the nucleus. The enzyme catalyses [protein]-peptidylproline (omega=180) = [protein]-peptidylproline (omega=0). In terms of biological role, PPIases accelerate the folding of proteins. It catalyzes the cis-trans isomerization of proline imidic peptide bonds in oligopeptides. The polypeptide is Peptidyl-prolyl cis-trans isomerase-like 4 (PPIL4) (Homo sapiens (Human)).